We begin with the raw amino-acid sequence, 293 residues long: Glycine N-methyltransferase (293 aa).

Position 2 is an N-acetylvaline (Val-2). Residues Ser-4 and Tyr-6 each coordinate (6S)-5-methyl-5,6,7,8-tetrahydrofolate. Phosphoserine is present on Ser-10. S-adenosyl-L-methionine contacts are provided by Tyr-22, Trp-31, Tyr-34, and Arg-41. Position 34 is a phosphotyrosine (Tyr-34). Lys-46 bears the N6-succinyllysine mark. S-adenosyl-L-methionine-binding positions include Ala-65, 86-88 (DAS), 117-118 (NW), 137-140 (LGNS), and Arg-176. Residues Lys-191, Lys-196, and Lys-201 each carry the N6-succinyllysine modification. His-215 serves as a coordination point for (6S)-5-methyl-5,6,7,8-tetrahydrofolate. Tyr-221 is a binding site for S-adenosyl-L-methionine. Arg-240 serves as a coordination point for (6S)-5-methyl-5,6,7,8-tetrahydrofolate.

Belongs to the class I-like SAM-binding methyltransferase superfamily. Glycine N-methyltransferase family. In terms of assembly, homotetramer. In terms of tissue distribution, abundant in liver.

Its subcellular location is the cytoplasm. It carries out the reaction glycine + S-adenosyl-L-methionine = sarcosine + S-adenosyl-L-homocysteine + H(+). With respect to regulation, inhibited by 5-methyltetrahydrofolate monoglutamate and by 5-methyltetrahydrofolate pentaglutamate, inhibition is much more effective by the pentaglutamate form than by the monoglutamate form. Two molecules of 5-methyltetrahydrofolate are bound per tetramer. The binding sites are localized between subunits. Inhibitor binding may preclude movements of the polypeptide chain that are necessary for enzyme activity. Its function is as follows. Catalyzes the methylation of glycine by using S-adenosylmethionine (AdoMet) to form N-methylglycine (sarcosine) with the concomitant production of S-adenosylhomocysteine (AdoHcy), a reaction regulated by the binding of 5-methyltetrahydrofolate. Possible crucial role in the regulation of tissue concentration of AdoMet and of metabolism of methionine. The chain is Glycine N-methyltransferase (Gnmt) from Rattus norvegicus (Rat).